The chain runs to 1071 residues: DNA-directed RNA polymerase subunit beta (1071 aa).

It belongs to the RNA polymerase beta chain family. In plastids the minimal PEP RNA polymerase catalytic core is composed of four subunits: alpha, beta, beta', and beta''. When a (nuclear-encoded) sigma factor is associated with the core the holoenzyme is formed, which can initiate transcription.

The protein localises to the plastid. Its subcellular location is the chloroplast. The catalysed reaction is RNA(n) + a ribonucleoside 5'-triphosphate = RNA(n+1) + diphosphate. Its function is as follows. DNA-dependent RNA polymerase catalyzes the transcription of DNA into RNA using the four ribonucleoside triphosphates as substrates. In Anthoceros angustus (Hornwort), this protein is DNA-directed RNA polymerase subunit beta.